Reading from the N-terminus, the 214-residue chain is Adenylate kinase (214 aa).

15-20 serves as a coordination point for ATP; that stretch reads GAGKGT. Positions 35–64 are NMP; the sequence is ASGDLFREAIKNQSVIGRKIAAIISQGGYV. AMP-binding positions include Ser-36, Arg-41, 62–64, 90–93, and Gln-97; these read GYV and GYPR. The interval 127 to 164 is LID; the sequence is NRVICNNCNSVYNLLFQKPLVENSCDQCSAKLVKRSDD. Residue Arg-128 participates in ATP binding. Positions 131 and 134 each coordinate Zn(2+). 137–138 lines the ATP pocket; sequence VY. The Zn(2+) site is built by Cys-151 and Cys-154. The AMP site is built by Arg-161 and Arg-172. Leu-200 lines the ATP pocket.

It belongs to the adenylate kinase family. Monomer.

It localises to the cytoplasm. The enzyme catalyses AMP + ATP = 2 ADP. It functions in the pathway purine metabolism; AMP biosynthesis via salvage pathway; AMP from ADP: step 1/1. Its function is as follows. Catalyzes the reversible transfer of the terminal phosphate group between ATP and AMP. Plays an important role in cellular energy homeostasis and in adenine nucleotide metabolism. The sequence is that of Adenylate kinase from Mycoplasma genitalium (strain ATCC 33530 / DSM 19775 / NCTC 10195 / G37) (Mycoplasmoides genitalium).